The chain runs to 253 residues: Triosephosphate isomerase (253 aa).

Substrate contacts are provided by asparagine 12 and lysine 14. The Electrophile role is filled by histidine 96. The active-site Proton acceptor is the glutamate 169.

The protein belongs to the triosephosphate isomerase family. In terms of assembly, homodimer.

The protein localises to the cytoplasm. The enzyme catalyses D-glyceraldehyde 3-phosphate = dihydroxyacetone phosphate. It functions in the pathway carbohydrate biosynthesis; gluconeogenesis. Its pathway is carbohydrate degradation; glycolysis; D-glyceraldehyde 3-phosphate from glycerone phosphate: step 1/1. In terms of biological role, antigen to the host M.1 monoclonal antibody. The protein is Triosephosphate isomerase (TPI) of Schistosoma mansoni (Blood fluke).